A 515-amino-acid chain; its full sequence is Sphingolipid 10-desaturase (515 aa).

A helical transmembrane segment spans residues 3 to 23 (AVWALLWALQLGTLVGCALVL). Residues 46-113 (AKPISDQKAA…DISFVFRVMH (68 aa)) enclose the Cytochrome b5 heme-binding domain. Heme-binding residues include His-90 and His-113. The helical transmembrane segment at 198-218 (TWLLWNTAVLISIIALSVISM) threads the bilayer. Positions 245 to 249 (HDAEH) match the Histidine box-1 motif. Residues 258–278 (LNDILGWIYGTVFLGVNGAWW) traverse the membrane as a helical segment. The Histidine box-2 motif lies at 281-286 (EHREHH). A run of 3 helical transmembrane segments spans residues 322–342 (IIHF…FIVG), 359–379 (PWTI…LSQT), and 382–402 (PIPV…QLLG). The Histidine box-3 signature appears at 447 to 451 (HYSHH).

The protein belongs to the fatty acid desaturase type 1 family. Requires Fe(2+) as cofactor.

The protein localises to the membrane. It catalyses the reaction a (4E,8E)-4-sphinga-4,8-dienine ceramide + 2 Fe(II)-[cytochrome b5] + O2 + 2 H(+) = an N-acyl-(4E,8E,10E)-sphingatrienine + 2 Fe(III)-[cytochrome b5] + 2 H2O. It participates in lipid metabolism; sphingolipid metabolism. Functionally, fatty acid desaturase that catalyzes the introduction of the third double bond at the Delta(10) position in d18:3Delta4,8,10 triunsaturated sphingolipid long fatty acid chains. The cytochrome b5 domain probably acts as the direct electron donor to the active site of the desaturase. The protein is Sphingolipid 10-desaturase of Thalassiosira pseudonana (Marine diatom).